The sequence spans 270 residues: 3-methyl-2-oxobutanoate hydroxymethyltransferase (270 aa).

Mg(2+)-binding residues include aspartate 43 and aspartate 82. 3-methyl-2-oxobutanoate contacts are provided by residues 43–44 (DS), aspartate 82, and lysine 110. Glutamate 112 contributes to the Mg(2+) binding site. Glutamate 179 (proton acceptor) is an active-site residue.

The protein belongs to the PanB family. As to quaternary structure, homodecamer; pentamer of dimers. It depends on Mg(2+) as a cofactor.

It localises to the cytoplasm. The catalysed reaction is 3-methyl-2-oxobutanoate + (6R)-5,10-methylene-5,6,7,8-tetrahydrofolate + H2O = 2-dehydropantoate + (6S)-5,6,7,8-tetrahydrofolate. It functions in the pathway cofactor biosynthesis; (R)-pantothenate biosynthesis; (R)-pantoate from 3-methyl-2-oxobutanoate: step 1/2. Functionally, catalyzes the reversible reaction in which hydroxymethyl group from 5,10-methylenetetrahydrofolate is transferred onto alpha-ketoisovalerate to form ketopantoate. The chain is 3-methyl-2-oxobutanoate hydroxymethyltransferase from Psychrobacter sp. (strain PRwf-1).